Consider the following 505-residue polypeptide: DEAD-box ATP-dependent RNA helicase 38 (505 aa).

Residues 1–81 (MADGGKPPTP…DQGPPLLDDS (81 aa)) are disordered. Low complexity predominate over residues 27–44 (KAAAAAEAASSSSSNEPA). Positions 100-129 (AAFEDLKLTPELLKGLHDEMGFSRPSKIQA) match the Q motif motif. One can recognise a Helicase ATP-binding domain in the interval 134 to 310 (MILTPPYKDL…TRVIKDGNQI (177 aa)). An ATP-binding site is contributed by 147–154 (AHNGSGKT). A DEAD box motif is present at residues 254–257 (DEAD). The 156-residue stretch at 338 to 493 (VIKDKIFEFG…EVRNWQSEED (156 aa)) folds into the Helicase C-terminal domain.

It belongs to the DEAD box helicase family. DDX19/DBP5 subfamily.

The protein resides in the cytoplasm. Its subcellular location is the nucleus. The catalysed reaction is ATP + H2O = ADP + phosphate + H(+). Its function is as follows. ATP-dependent RNA helicase essential for mRNA export from the nucleus. Plays an important role in the positive regulation of CBF/DREB transcription factors. The sequence is that of DEAD-box ATP-dependent RNA helicase 38 from Oryza sativa subsp. japonica (Rice).